The sequence spans 398 residues: 2-amino-3-ketobutyrate coenzyme A ligase (398 aa).

111–112 (CF) serves as a coordination point for pyridoxal 5'-phosphate. Residue H136 coordinates substrate. Residues S185, 210–213 (DDSH), 241–244 (TLGK), and 274–275 (SN) each bind pyridoxal 5'-phosphate. The residue at position 244 (K244) is an N6-(pyridoxal phosphate)lysine. R368 provides a ligand contact to substrate.

This sequence belongs to the class-II pyridoxal-phosphate-dependent aminotransferase family. Homodimer. Pyridoxal 5'-phosphate serves as cofactor.

It catalyses the reaction glycine + acetyl-CoA = (2S)-2-amino-3-oxobutanoate + CoA. Its pathway is amino-acid degradation; L-threonine degradation via oxydo-reductase pathway; glycine from L-threonine: step 2/2. Functionally, catalyzes the cleavage of 2-amino-3-ketobutyrate to glycine and acetyl-CoA. The polypeptide is 2-amino-3-ketobutyrate coenzyme A ligase (Escherichia coli (strain K12)).